The chain runs to 556 residues: Glutamine--tRNA ligase (556 aa).

The 'HIGH' region motif lies at 34–44 (PEPNGYLHIGH). Residues 35 to 37 (EPN) and 41 to 47 (HIGHAKS) each bind ATP. L-glutamine is bound by residues Asp-67 and Tyr-212. ATP is bound by residues Thr-231, 263–264 (RL), and 271–273 (MSK). The short motif at 270 to 274 (VMSKR) is the 'KMSKS' region element.

It belongs to the class-I aminoacyl-tRNA synthetase family. In terms of assembly, monomer.

Its subcellular location is the cytoplasm. It carries out the reaction tRNA(Gln) + L-glutamine + ATP = L-glutaminyl-tRNA(Gln) + AMP + diphosphate. This chain is Glutamine--tRNA ligase, found in Nitrosomonas europaea (strain ATCC 19718 / CIP 103999 / KCTC 2705 / NBRC 14298).